A 172-amino-acid chain; its full sequence is MNRSEKAALISQIKAKADTASFVVVTDFKGISVEELTCLRAKLRESGGEYLVVKNTLARIAFTDGIHSIIKDQFKDNCAIAFGYNEPVAIAKTINDFVKTSKFITVRHGSLEGTLLTTKDIEDLAKLPSKPELIAQTLGTLNAVPTNFVSLFANIIRPLFYALQAIEAKKAA.

Belongs to the universal ribosomal protein uL10 family. In terms of assembly, part of the ribosomal stalk of the 50S ribosomal subunit. The N-terminus interacts with L11 and the large rRNA to form the base of the stalk. The C-terminus forms an elongated spine to which L12 dimers bind in a sequential fashion forming a multimeric L10(L12)X complex.

Its function is as follows. Forms part of the ribosomal stalk, playing a central role in the interaction of the ribosome with GTP-bound translation factors. The polypeptide is Large ribosomal subunit protein uL10 (Lawsonia intracellularis (strain PHE/MN1-00)).